Reading from the N-terminus, the 466-residue chain is Ornithine decarboxylase (466 aa).

Lys116 carries the post-translational modification N6-(pyridoxal phosphate)lysine. Pyridoxal 5'-phosphate-binding positions include Ser247, Gly286, and 318–321; that span reads EPGR. 362–363 lines the substrate pocket; that stretch reads FD. The active-site Proton donor; shared with dimeric partner is Cys411. Asp412 is a binding site for substrate. Tyr441 is a binding site for pyridoxal 5'-phosphate.

Belongs to the Orn/Lys/Arg decarboxylase class-II family. As to quaternary structure, homodimer. Only the dimer is catalytically active, as the active sites are constructed of residues from both monomers. It depends on pyridoxal 5'-phosphate as a cofactor.

It localises to the cytoplasm. The enzyme catalyses L-ornithine + H(+) = putrescine + CO2. It participates in amine and polyamine biosynthesis; putrescine biosynthesis via L-ornithine pathway; putrescine from L-ornithine: step 1/1. Inhibited by antizyme (AZ) OAZ1 in response to polyamine levels. AZ inhibits the assembly of the functional homodimer by binding to ODC monomers and targeting them for ubiquitin-independent proteolytic destruction by the 26S proteasome. Catalyzes the first and rate-limiting step of polyamine biosynthesis that converts ornithine into putrescine, which is the precursor for the polyamines, spermidine and spermine. Polyamines are essential for cell proliferation and are implicated in cellular processes, ranging from DNA replication to apoptosis. This chain is Ornithine decarboxylase, found in Saccharomyces cerevisiae (strain ATCC 204508 / S288c) (Baker's yeast).